The sequence spans 251 residues: Vitamin B12 import ATP-binding protein BtuD (251 aa).

In terms of domain architecture, ABC transporter spans 2 to 236; the sequence is IRVNSLQVDS…EVLQSVFGTS (235 aa). 30–37 is a binding site for ATP; that stretch reads GPNGCGKS.

It belongs to the ABC transporter superfamily. Vitamin B12 importer (TC 3.A.1.13.1) family. The complex is composed of two ATP-binding proteins (BtuD), two transmembrane proteins (BtuC) and a solute-binding protein (BtuF).

Its subcellular location is the cell inner membrane. The enzyme catalyses an R-cob(III)alamin(out) + ATP + H2O = an R-cob(III)alamin(in) + ADP + phosphate + H(+). Part of the ABC transporter complex BtuCDF involved in vitamin B12 import. Responsible for energy coupling to the transport system. This Vibrio cholerae serotype O1 (strain ATCC 39541 / Classical Ogawa 395 / O395) protein is Vitamin B12 import ATP-binding protein BtuD.